A 401-amino-acid polypeptide reads, in one-letter code: Ribosomal RNA large subunit methyltransferase G (401 aa).

It belongs to the methyltransferase superfamily. RlmG family.

The protein localises to the cytoplasm. The enzyme catalyses guanosine(1835) in 23S rRNA + S-adenosyl-L-methionine = N(2)-methylguanosine(1835) in 23S rRNA + S-adenosyl-L-homocysteine + H(+). In terms of biological role, specifically methylates the guanine in position 1835 (m2G1835) of 23S rRNA. The chain is Ribosomal RNA large subunit methyltransferase G from Shewanella loihica (strain ATCC BAA-1088 / PV-4).